The sequence spans 310 residues: MIQAIELGKVAVLYGGNSSEREISLIGGRAVHAALCAAGIDAHLLDTGDPNRIWTLKDEHFSRAFVMLHGRGGEDGEIQAILQWLGIPYTGSRVLACALAMDKVVCKKVWQSAGLPVLADVLVTPESRFETLVEQLHCQDFVIKPALEGSSVGVSRVKNQEQLAAAIPFAGGARAKIMAEPWIVGRELTYGIVNDTVLPAIEIVAGNDHDFYDYDAKYHAANTQYLCPAPIDAALDARCREIAFAAFQAIGARGWGRVDMIVDAQNRPYLLEINLVPGMTTHSLVPMAAQQIGMDFSALVQSILAQTLTS.

The 199-residue stretch at 107 to 305 folds into the ATP-grasp domain; the sequence is KKVWQSAGLP…FSALVQSILA (199 aa). Residue 134–189 coordinates ATP; it reads EQLHCQDFVIKPALEGSSVGVSRVKNQEQLAAAIPFAGGARAKIMAEPWIVGRELT. Mg(2+) contacts are provided by D259, E272, and N274.

Belongs to the D-alanine--D-alanine ligase family. It depends on Mg(2+) as a cofactor. Mn(2+) is required as a cofactor.

Its subcellular location is the cytoplasm. The enzyme catalyses 2 D-alanine + ATP = D-alanyl-D-alanine + ADP + phosphate + H(+). Its pathway is cell wall biogenesis; peptidoglycan biosynthesis. Cell wall formation. The protein is D-alanine--D-alanine ligase of Dichelobacter nodosus (strain VCS1703A).